Here is a 268-residue protein sequence, read N- to C-terminus: MVYPEEPFWVLPTVTGFYEDRDYRVNVVEALQEFWQMKQSRGAELKNGALVIYESIPSNSQPYICFVTLPGGSCFGSFQNCPTKAEARRSSAKIALMNSVFNEHPSRRISDEFIQKAVQDARTSFKGTSQINEGTESGIGAFRFMLEANKGRTMLEFQELMTVFQLLHWNGSLKAMRERHCSRQEVVAHYSNRSLDDEMRSQMALDWIAREHDNPGVIRRELVLAERELETFRMAGRELRFPKEKKDILMIAHNQLGGSALNSATIDD.

This sequence belongs to the LIX1 family. As to quaternary structure, interacts with ft (via intracellular domain) and ds (via intracellular domain).

It localises to the apical cell membrane. The protein localises to the cytoplasm. Its function is as follows. Component of the Fat (ft) signaling pathway that functions in normal development of various organs such as the wing and leg. In developing imaginal disks, involved in regulating both the protein levels and apical localization of ft and ds. Involved in establishing planar cell polarity (PCP) along the anterior-posterior axis of the wing (the early Fz signaling event), probably by acting upstream of ds and ft to regulate Fz activity. This Drosophila melanogaster (Fruit fly) protein is Protein limb expression 1 homolog.